Consider the following 935-residue polypeptide: Peptidyl-glycine alpha-amidating monooxygenase A (935 aa).

The N-terminal stretch at 1–36 (MASLSSSFLVLFLLFQNSCYCFRSPLSVFKRYEEST) is a signal peptide. The interval 1–390 (MASLSSSFLV…KREEEEVLDQ (390 aa)) is peptidylglycine alpha-hydroxylating monooxygenase. Over 37-825 (RSLSNDCLGT…VQESSAGVSF (789 aa)) the chain is Intragranular. Disulfide bonds link cysteine 43-cysteine 182, cysteine 77-cysteine 122, cysteine 110-cysteine 127, cysteine 223-cysteine 330, and cysteine 289-cysteine 311. Cu(2+) contacts are provided by histidine 103 and histidine 104. Cu(2+)-binding residues include histidine 168, histidine 238, histidine 240, and methionine 310. Positions 362–385 (HGHHHTEAEPEKNTGLQQPKREEE) are disordered. Positions 391-712 (DVHLEEDTDW…SPSKAEHRSV (322 aa)) are peptidyl-alpha-hydroxyglycine alpha-amidating lyase. An a protein-binding site is contributed by arginine 426. 3 NHL repeats span residues 463-504 (SKVL…LGAG), 512-557 (LGRA…FSPN), and 565-609 (GEET…FHAE). 2 disulfides stabilise this stretch: cysteine 526–cysteine 547 and cysteine 594–cysteine 605. A protein-binding residues include tyrosine 546 and arginine 598. Asparagine 658 is a glycosylation site (N-linked (GlcNAc...) asparagine). The NHL 4 repeat unit spans residues 662 to 705 (GDILDTFIPARKNFDMPHDIAAADDGTVYVGDAHANAVWKFSPS). The segment covering 728–751 (FETHIRSRPKTNESVEKQTQEKQQ) has biased composition (basic and acidic residues). Disordered stretches follow at residues 728–764 (FETHIRSRPKTNESVEKQTQEKQQKQKNSAGVSTQEK) and 778–812 (QEKQNVVQESSAGVPTQEKQSVVQESSAGVSTQEK). The N-linked (GlcNAc...) asparagine glycan is linked to asparagine 739. Positions 755-764 (NSAGVSTQEK) are enriched in polar residues. The chain crosses the membrane as a helical span at residues 826-846 (VLIITLLIIPIAVLIAIAIFI). Residues 847–935 (RWRKVRMYGG…PIPPAPVSSS (89 aa)) lie on the Cytoplasmic side of the membrane. A disordered region spans residues 896–935 (KGFDRLSTEGSDQEKDDDDGSDSEEEYSAPPIPPAPVSSS). Acidic residues predominate over residues 909–922 (EKDDDDGSDSEEEY). Over residues 925-935 (PPIPPAPVSSS) the composition is skewed to pro residues.

It in the C-terminal section; belongs to the peptidyl-alpha-hydroxyglycine alpha-amidating lyase family. In the N-terminal section; belongs to the copper type II ascorbate-dependent monooxygenase family. Monomer. The cofactor is Zn(2+). Cu(2+) serves as cofactor.

Its subcellular location is the cytoplasmic vesicle. It is found in the secretory vesicle membrane. It catalyses the reaction a [peptide]-C-terminal glycine + 2 L-ascorbate + O2 = a [peptide]-C-terminal (2S)-2-hydroxyglycine + 2 monodehydro-L-ascorbate radical + H2O. The enzyme catalyses a [peptide]-C-terminal (2S)-2-hydroxyglycine = a [peptide]-C-terminal amide + glyoxylate. In terms of biological role, bifunctional enzyme that catalyzes amidation of the C-terminus of proteins. Alpha-amidation is present at the C-terminus of many endocrine hormones and neuropeptides and is required for their activity. C-terminal amidation also takes place in response to protein fragmentation triggered by oxidative stress, promoting degradation of amidated protein fragments by the proteasome. Alpha-amidation involves two sequential reactions, both of which are catalyzed by separate catalytic domains of the enzyme. The first step, catalyzed by peptidyl alpha-hydroxylating monooxygenase (PHM) domain, is the copper-, ascorbate-, and O2- dependent stereospecific hydroxylation (with S stereochemistry) at the alpha-carbon (C-alpha) of the C-terminal glycine of the peptidylglycine substrate. The second step, catalyzed by the peptidylglycine amidoglycolate lyase (PAL) domain, is the zinc-dependent cleavage of the N-C-alpha bond, producing the alpha-amidated peptide and glyoxylate. The polypeptide is Peptidyl-glycine alpha-amidating monooxygenase A (pam-a) (Xenopus laevis (African clawed frog)).